Reading from the N-terminus, the 258-residue chain is 3-deoxy-manno-octulosonate cytidylyltransferase (258 aa).

The protein belongs to the KdsB family.

It localises to the cytoplasm. It carries out the reaction 3-deoxy-alpha-D-manno-oct-2-ulosonate + CTP = CMP-3-deoxy-beta-D-manno-octulosonate + diphosphate. Its pathway is nucleotide-sugar biosynthesis; CMP-3-deoxy-D-manno-octulosonate biosynthesis; CMP-3-deoxy-D-manno-octulosonate from 3-deoxy-D-manno-octulosonate and CTP: step 1/1. It participates in bacterial outer membrane biogenesis; lipopolysaccharide biosynthesis. Its function is as follows. Activates KDO (a required 8-carbon sugar) for incorporation into bacterial lipopolysaccharide in Gram-negative bacteria. In Pasteurella multocida (strain Pm70), this protein is 3-deoxy-manno-octulosonate cytidylyltransferase.